The sequence spans 276 residues: S-adenosylmethionine decarboxylase proenzyme (276 aa).

Catalysis depends on Ser124, which acts as the Schiff-base intermediate with substrate; via pyruvic acid. At Ser124 the chain carries Pyruvic acid (Ser); by autocatalysis. The Proton acceptor; for processing activity role is filled by His129. The Proton donor; for catalytic activity role is filled by Cys152.

Belongs to the prokaryotic AdoMetDC family. Type 2 subfamily. In terms of assembly, heterooctamer of four alpha and four beta chains arranged as a tetramer of alpha/beta heterodimers. Pyruvate is required as a cofactor. In terms of processing, is synthesized initially as an inactive proenzyme. Formation of the active enzyme involves a self-maturation process in which the active site pyruvoyl group is generated from an internal serine residue via an autocatalytic post-translational modification. Two non-identical subunits are generated from the proenzyme in this reaction, and the pyruvate is formed at the N-terminus of the alpha chain, which is derived from the carboxyl end of the proenzyme. The post-translation cleavage follows an unusual pathway, termed non-hydrolytic serinolysis, in which the side chain hydroxyl group of the serine supplies its oxygen atom to form the C-terminus of the beta chain, while the remainder of the serine residue undergoes an oxidative deamination to produce ammonia and the pyruvoyl group blocking the N-terminus of the alpha chain.

It carries out the reaction S-adenosyl-L-methionine + H(+) = S-adenosyl 3-(methylsulfanyl)propylamine + CO2. It functions in the pathway amine and polyamine biosynthesis; S-adenosylmethioninamine biosynthesis; S-adenosylmethioninamine from S-adenosyl-L-methionine: step 1/1. Functionally, catalyzes the decarboxylation of S-adenosylmethionine to S-adenosylmethioninamine (dcAdoMet), the propylamine donor required for the synthesis of the polyamines spermine and spermidine from the diamine putrescine. The protein is S-adenosylmethionine decarboxylase proenzyme of Desulfitobacterium hafniense (strain DSM 10664 / DCB-2).